The following is a 736-amino-acid chain: 3',5'-cyclic-AMP phosphodiesterase 4B (736 aa).

Disordered regions lie at residues 51–78, 189–209, and 282–301; these read QLPP…TTLP, LHGT…SRVN, and KQND…KKKK. Ser-290 carries the post-translational modification Phosphoserine. The region spanning 330–659 is the PDEase domain; the sequence is VNTENEDHLA…NWYQSMIPQS (330 aa). His-406 serves as the catalytic Proton donor. His-406 contacts 3',5'-cyclic AMP. 2 residues coordinate AMP: His-406 and His-410. His-410, His-446, Asp-447, and Asp-564 together coordinate Zn(2+). Residues Asp-447, Asp-564, Gln-615, and Phe-618 each coordinate AMP. Asp-447 provides a ligand contact to Mg(2+). Mn(2+) is bound at residue Asp-447. Gln-615 and Phe-618 together coordinate 3',5'-cyclic AMP. Residues Ser-659 and Ser-661 each carry the phosphoserine modification. A disordered region spans residues 685 to 736; the sequence is DEEDSEGPEKEGEGHSYFSSTKTLCVIDPENRDSLGETDIDIATEDKSPVDT.

This sequence belongs to the cyclic nucleotide phosphodiesterase family. PDE4 subfamily. In terms of assembly, interacts with DISC1. Zn(2+) serves as cofactor. Mg(2+) is required as a cofactor. Requires Mn(2+) as cofactor. As to expression, expressed in brain, heart, lung and skeletal muscle. Expressed in white blood cells. Brain-specific isoform.

It is found in the cytoplasm. Its subcellular location is the cell membrane. The enzyme catalyses 3',5'-cyclic AMP + H2O = AMP + H(+). It functions in the pathway purine metabolism; 3',5'-cyclic AMP degradation; AMP from 3',5'-cyclic AMP: step 1/1. Inhibited by rolipram. Hydrolyzes the second messenger cAMP, which is a key regulator of many important physiological processes. May be involved in mediating central nervous system effects of therapeutic agents ranging from antidepressants to antiasthmatic and anti-inflammatory agents. This is 3',5'-cyclic-AMP phosphodiesterase 4B from Homo sapiens (Human).